A 151-amino-acid chain; its full sequence is Large ribosomal subunit protein bL9 (151 aa).

It belongs to the bacterial ribosomal protein bL9 family.

Binds to the 23S rRNA. The protein is Large ribosomal subunit protein bL9 of Nitrosomonas europaea (strain ATCC 19718 / CIP 103999 / KCTC 2705 / NBRC 14298).